A 30-amino-acid chain; its full sequence is Rothein 3.1 (30 aa).

Leu-30 carries the leucine amide modification.

In terms of tissue distribution, expressed by the skin dorsal glands.

Its subcellular location is the secreted. Functionally, lacks antimicrobial activity. Does not inhibit the formation of NO by neuronal nitric oxide. In Litoria rothii (Roth's tree frog), this protein is Rothein 3.1.